We begin with the raw amino-acid sequence, 127 residues long: Aspartate 1-decarboxylase (127 aa).

Serine 25 functions as the Schiff-base intermediate with substrate; via pyruvic acid in the catalytic mechanism. Serine 25 is subject to Pyruvic acid (Ser). A substrate-binding site is contributed by threonine 57. The active-site Proton donor is tyrosine 58. 73–75 (GAA) is a substrate binding site.

Belongs to the PanD family. In terms of assembly, heterooctamer of four alpha and four beta subunits. Pyruvate serves as cofactor. Post-translationally, is synthesized initially as an inactive proenzyme, which is activated by self-cleavage at a specific serine bond to produce a beta-subunit with a hydroxyl group at its C-terminus and an alpha-subunit with a pyruvoyl group at its N-terminus.

It localises to the cytoplasm. The enzyme catalyses L-aspartate + H(+) = beta-alanine + CO2. It participates in cofactor biosynthesis; (R)-pantothenate biosynthesis; beta-alanine from L-aspartate: step 1/1. Functionally, catalyzes the pyruvoyl-dependent decarboxylation of aspartate to produce beta-alanine. The polypeptide is Aspartate 1-decarboxylase (Desulfitobacterium hafniense (strain DSM 10664 / DCB-2)).